The primary structure comprises 894 residues: Nitrate reductase [NADPH] (894 aa).

Residues 1 to 79 (MAVKSQLGVT…PEDLKTPDHR (79 aa)) are disordered. Residues 7-16 (LGVTYTTKTF) show a composition bias toward polar residues. Positions 69–79 (LPEDLKTPDHR) are enriched in basic and acidic residues. Residue cysteine 169 participates in Mo-molybdopterin binding. One can recognise a Cytochrome b5 heme-binding domain in the interval 535-610 (VRIISLEELK…MPQYHIGTLN (76 aa)). Residues histidine 570 and histidine 593 each coordinate heme. The FAD-binding FR-type domain occupies 638 to 749 (KYWSKAILET…KGPVGKFEYL (112 aa)). FAD-binding positions include 692-695 (RAYT), 709-713 (LIKIY), 723-725 (KMT), serine 773, and threonine 776.

This sequence belongs to the nitrate reductase family. In terms of assembly, homodimer. FAD is required as a cofactor. Requires heme as cofactor. Mo-molybdopterin serves as cofactor.

The catalysed reaction is nitrite + NADP(+) + H2O = nitrate + NADPH + H(+). Functionally, nitrate reductase is a key enzyme involved in the first step of nitrate assimilation in plants, fungi and bacteria. The sequence is that of Nitrate reductase [NADPH] (NIA) from Beauveria bassiana (White muscardine disease fungus).